Consider the following 394-residue polypeptide: Phosphoglycerate kinase (394 aa).

Substrate is bound by residues aspartate 21 to asparagine 23, arginine 36, histidine 59 to arginine 62, arginine 118, and arginine 151. Serine 183 is subject to Phosphoserine. Residue lysine 201 participates in ATP binding. Position 299 is a phosphothreonine (threonine 299). Residues glutamate 323 and glycine 350–serine 353 each bind ATP.

This sequence belongs to the phosphoglycerate kinase family. As to quaternary structure, monomer.

The protein localises to the cytoplasm. It catalyses the reaction (2R)-3-phosphoglycerate + ATP = (2R)-3-phospho-glyceroyl phosphate + ADP. Its pathway is carbohydrate degradation; glycolysis; pyruvate from D-glyceraldehyde 3-phosphate: step 2/5. In Shouchella clausii (strain KSM-K16) (Alkalihalobacillus clausii), this protein is Phosphoglycerate kinase.